Consider the following 2393-residue polypeptide: Leucine-rich repeat serine/threonine-protein kinase 1 (2393 aa).

ANK repeat units follow at residues 56-86 (HGRT…SLNL), 90-120 (RGKT…PMKS), 123-152 (EGHC…KESE), 197-226 (EDET…HLLQ), 230-259 (SKDT…QLVK), 264-293 (EGST…PSEF), 317-347 (ECRT…SIDG), 361-390 (RGRT…DVNL), 407-437 (IGSG…DTDN), and 439-464 (ALRL…FADP). LRR repeat units follow at residues 532-553 (AITR…LFQM), 555-576 (SLRS…TYYI), 580-600 (SLEI…QFLS), 604-625 (QLQQ…IWLC), and 627-648 (ALKE…ARAS). Residues 649–675 (RGERPRLNNSNNNFNTQSPTQESNPIV) form a disordered region. LRR repeat units lie at residues 718–739 (TLTT…LACT), 742–763 (RLLI…ACVP), and 765–787 (HLRT…SPLH). Positions 797 to 844 (TSNGSMLPKRRNSPARQHRSRSKSAVRSQRSLSVSRHHALIDPQKEEE) are disordered. A compositionally biased stretch (basic residues) spans 804-820 (PKRRNSPARQHRSRSKS). Positions 821 to 830 (AVRSQRSLSV) are enriched in polar residues. Residues 835–844 (ALIDPQKEEE) show a composition bias toward basic and acidic residues. LRR repeat units follow at residues 856 to 877 (WLKT…NAAS), 883 to 905 (ALNV…ARLT), 906 to 928 (LLSM…YGML), and 930 to 952 (RLWS…VNVE). The Roc domain maps to 969–1167 (ESKTYHHLRL…NTIYRTAWEV (199 aa)). GTP-binding positions include 982-989 (GSDGVGKS), 1040-1044 (DFGGQ), and 1098-1101 (TNLD). The COR domain maps to 1233 to 1422 (FYAACTFLHD…GFWSRLVTRI (190 aa)). Disordered regions lie at residues 1361–1382 (CPSP…TDQN) and 1596–1633 (RNGS…RTTG). Polar residues-rich tracts occupy residues 1366–1382 (GSPT…TDQN) and 1620–1633 (ITSS…RTTG). One can recognise a Protein kinase domain in the interval 1694-1992 (LKRSRMLGRG…LVGFCAAPEF (299 aa)). ATP is bound by residues 1700 to 1708 (LGRGAFGFV) and Lys1726. Asp1847 (proton acceptor) is an active-site residue.

The protein belongs to the protein kinase superfamily. TKL Ser/Thr protein kinase family. ROCO subfamily. Mg(2+) is required as a cofactor. The cofactor is Mn(2+). In terms of tissue distribution, expressed in cell bodies, but not in dendritic or axonal processes, of adult head neurons. Also present in non-neuronal tissues, such as the body wall musculature and the epithelial cells of the nematode vulva.

The protein localises to the golgi apparatus. The catalysed reaction is L-seryl-[protein] + ATP = O-phospho-L-seryl-[protein] + ADP + H(+). The enzyme catalyses L-threonyl-[protein] + ATP = O-phospho-L-threonyl-[protein] + ADP + H(+). In terms of biological role, determines polarized sorting of synaptic vesicle (SV) proteins to the axons by excluding SV proteins from the dendrite-specific transport machinery in the Golgi. Role in stress response. Appears to antagonize the effects of pink-1 both in the regulation of axon guidance and stress response. This chain is Leucine-rich repeat serine/threonine-protein kinase 1 (lrk-1), found in Caenorhabditis elegans.